Consider the following 716-residue polypeptide: Antibacterial effector protein Tle3 (716 aa).

A disordered region spans residues 68–87 (PTLPGGQANPGYLTPAGYSL).

Interacts in the cytoplasm with the adapter protein Tla3. Interacts in the periplasm with the immunity protein Tli3.

It localises to the secreted. The protein localises to the host periplasm. Neutralized by the immunity protein Tli3 in the periplasm of P.aeruginosa cells. Functionally, antibacterial effector. Is toxic once delivered in the periplasm of prey bacteria. The sequence is that of Antibacterial effector protein Tle3 from Pseudomonas aeruginosa (strain ATCC 15692 / DSM 22644 / CIP 104116 / JCM 14847 / LMG 12228 / 1C / PRS 101 / PAO1).